Here is a 259-residue protein sequence, read N- to C-terminus: Ribose-5-phosphate isomerase (259 aa).

It belongs to the ribose 5-phosphate isomerase family.

It localises to the cytoplasm. It catalyses the reaction aldehydo-D-ribose 5-phosphate = D-ribulose 5-phosphate. Its pathway is carbohydrate degradation; pentose phosphate pathway; D-ribose 5-phosphate from D-ribulose 5-phosphate (non-oxidative stage): step 1/1. This Vanderwaltozyma polyspora (strain ATCC 22028 / DSM 70294 / BCRC 21397 / CBS 2163 / NBRC 10782 / NRRL Y-8283 / UCD 57-17) (Kluyveromyces polysporus) protein is Ribose-5-phosphate isomerase (RKI1).